We begin with the raw amino-acid sequence, 341 residues long: Phosphate acyltransferase (341 aa).

This sequence belongs to the PlsX family. In terms of assembly, homodimer. Probably interacts with PlsY.

The protein resides in the cytoplasm. It catalyses the reaction a fatty acyl-[ACP] + phosphate = an acyl phosphate + holo-[ACP]. It participates in lipid metabolism; phospholipid metabolism. Functionally, catalyzes the reversible formation of acyl-phosphate (acyl-PO(4)) from acyl-[acyl-carrier-protein] (acyl-ACP). This enzyme utilizes acyl-ACP as fatty acyl donor, but not acyl-CoA. This chain is Phosphate acyltransferase, found in Lacticaseibacillus casei (strain BL23) (Lactobacillus casei).